An 89-amino-acid chain; its full sequence is Signal recognition particle 19 kDa protein (89 aa).

This sequence belongs to the SRP19 family. In terms of assembly, part of the signal recognition particle protein translocation system, which is composed of SRP and FtsY. Archaeal SRP consists of a 7S RNA molecule of 300 nucleotides and two protein subunits: SRP54 and SRP19.

It localises to the cytoplasm. Its function is as follows. Involved in targeting and insertion of nascent membrane proteins into the cytoplasmic membrane. Binds directly to 7S RNA and mediates binding of the 54 kDa subunit of the SRP. The chain is Signal recognition particle 19 kDa protein from Methanococcus maripaludis (strain C7 / ATCC BAA-1331).